The primary structure comprises 485 residues: ATP-dependent 6-phosphofructokinase 7 (485 aa).

ATP-binding positions include glycine 101, 164–165, and 189–192; these read RG and GDGT. Aspartate 190 contributes to the Mg(2+) binding site. Substrate-binding positions include 218-220, 263-265, glutamate 319, and 374-377; these read TID, MGR, and YMIR. Aspartate 220 serves as the catalytic Proton acceptor. Residues 449–485 form a disordered region; it reads SFLGPKDTSEEKKELPETPLLDDGAVDIPPVTKEVTK. Residues 455–464 show a composition bias toward basic and acidic residues; that stretch reads DTSEEKKELP.

Belongs to the phosphofructokinase type A (PFKA) family. PPi-dependent PFK group II subfamily. Atypical ATP-dependent clade 'X' sub-subfamily. As to quaternary structure, homotetramer. Mg(2+) is required as a cofactor. In terms of tissue distribution, expressed in roots, leaves, stems and flowers.

The protein resides in the cytoplasm. It catalyses the reaction beta-D-fructose 6-phosphate + ATP = beta-D-fructose 1,6-bisphosphate + ADP + H(+). It functions in the pathway carbohydrate degradation; glycolysis; D-glyceraldehyde 3-phosphate and glycerone phosphate from D-glucose: step 3/4. Its activity is regulated as follows. Allosterically activated by AMP. Functionally, catalyzes the phosphorylation of D-fructose 6-phosphate to fructose 1,6-bisphosphate by ATP, the first committing step of glycolysis. This Arabidopsis thaliana (Mouse-ear cress) protein is ATP-dependent 6-phosphofructokinase 7.